The primary structure comprises 495 residues: Probable cytosol aminopeptidase (495 aa).

Mn(2+) contacts are provided by Lys-258 and Asp-263. Lys-270 is an active-site residue. Asp-281, Asp-340, and Glu-342 together coordinate Mn(2+). The active site involves Arg-344.

This sequence belongs to the peptidase M17 family. Mn(2+) serves as cofactor.

The protein resides in the cytoplasm. The catalysed reaction is Release of an N-terminal amino acid, Xaa-|-Yaa-, in which Xaa is preferably Leu, but may be other amino acids including Pro although not Arg or Lys, and Yaa may be Pro. Amino acid amides and methyl esters are also readily hydrolyzed, but rates on arylamides are exceedingly low.. It catalyses the reaction Release of an N-terminal amino acid, preferentially leucine, but not glutamic or aspartic acids.. Presumably involved in the processing and regular turnover of intracellular proteins. Catalyzes the removal of unsubstituted N-terminal amino acids from various peptides. In Leptospira interrogans serogroup Icterohaemorrhagiae serovar copenhageni (strain Fiocruz L1-130), this protein is Probable cytosol aminopeptidase.